We begin with the raw amino-acid sequence, 357 residues long: MEKGMNVLHDFGIQSTHYLQVNYQDSQDWFILVSVIADLRNAFYVLFPIWFHLREAVGIKLLWVAVIGDWLNLVFKWILFGQRPYWWVMDTDYYSNASVPLIKQFPVTCETGPGSPSGHAMGTAGVYYVMVTSTLSMFRGKKKPTYRFRCLNVILWLGFWAVQLNVCLSRIYLAAHFPHQVVAGVLSGIAVAETFRHIQSIYNASLKKYFFITFFLLSFAIGFYLLLKGLGVDLLWTLEKARRWCERPEWVHIDTTPFASLLKNVGTLFGLGLALNSSMYRESCKGTLSKWFPFRLSCIVVSLILLHLFDSLKPPSQIELIFYVLSFCKSAAVPLASVSLIPYCLARVLGQPDKKSL.

Residues 1 to 28 (MEKGMNVLHDFGIQSTHYLQVNYQDSQD) are Lumenal-facing. A helical membrane pass occupies residues 29-49 (WFILVSVIADLRNAFYVLFPI). The Cytoplasmic segment spans residues 50 to 60 (WFHLREAVGIK). A helical membrane pass occupies residues 61 to 81 (LLWVAVIGDWLNLVFKWILFG). Topologically, residues 82-117 (QRPYWWVMDTDYYSNASVPLIKQFPVTCETGPGSPS) are lumenal. R83 lines the substrate pocket. N-linked (GlcNAc...) asparagine glycosylation is present at N96. A helical membrane pass occupies residues 118-138 (GHAMGTAGVYYVMVTSTLSMF). Catalysis depends on H119, which acts as the Proton donor. The Cytoplasmic portion of the chain corresponds to 139–147 (RGKKKPTYR). A helical membrane pass occupies residues 148 to 168 (FRCLNVILWLGFWAVQLNVCL). Over 169-170 (SR) the chain is Lumenal. R170 is a binding site for substrate. Residues 171-191 (IYLAAHFPHQVVAGVLSGIAV) form a helical membrane-spanning segment. H176 serves as the catalytic Nucleophile. Over 192 to 209 (AETFRHIQSIYNASLKKY) the chain is Cytoplasmic. A helical transmembrane segment spans residues 210–230 (FFITFFLLSFAIGFYLLLKGL). Residues 231–254 (GVDLLWTLEKARRWCERPEWVHID) lie on the Lumenal side of the membrane. Residues 255–275 (TTPFASLLKNVGTLFGLGLAL) form a helical membrane-spanning segment. The Cytoplasmic portion of the chain corresponds to 276–291 (NSSMYRESCKGTLSKW). Residues 292 to 312 (FPFRLSCIVVSLILLHLFDSL) form a helical membrane-spanning segment. Topologically, residues 313–320 (KPPSQIEL) are lumenal. A helical membrane pass occupies residues 321–341 (IFYVLSFCKSAAVPLASVSLI). Over 342-357 (PYCLARVLGQPDKKSL) the chain is Cytoplasmic. Positions 354–357 (KKSL) match the Prevents secretion from ER motif.

This sequence belongs to the glucose-6-phosphatase family.

Its subcellular location is the endoplasmic reticulum membrane. The catalysed reaction is D-glucose 6-phosphate + H2O = D-glucose + phosphate. Its pathway is carbohydrate biosynthesis; gluconeogenesis. Functionally, hydrolyzes glucose-6-phosphate to glucose in the endoplasmic reticulum. Forms with the glucose-6-phosphate transporter (SLC37A4/G6PT) the complex responsible for glucose production in the terminal step of glycogenolysis and gluconeogenesis. Hence, it is the key enzyme in homeostatic regulation of blood glucose levels. This Felis catus (Cat) protein is Glucose-6-phosphatase catalytic subunit 1 (G6PC1).